We begin with the raw amino-acid sequence, 908 residues long: Protein translocase subunit SecA (908 aa).

Residues Gln-87, Gly-105 to Thr-109, and Asp-512 contribute to the ATP site. The segment at Gly-865–Ser-908 is disordered. Residues Met-879 to Arg-888 are compositionally biased toward basic and acidic residues. Zn(2+) is bound by residues Cys-892, Cys-894, Cys-903, and His-904. Residues Arg-898–Ser-908 show a composition bias toward basic residues.

It belongs to the SecA family. As to quaternary structure, monomer and homodimer. Part of the essential Sec protein translocation apparatus which comprises SecA, SecYEG and auxiliary proteins SecDF-YajC and YidC. The cofactor is Zn(2+).

Its subcellular location is the cell inner membrane. It localises to the cytoplasm. The catalysed reaction is ATP + H2O + cellular proteinSide 1 = ADP + phosphate + cellular proteinSide 2.. Part of the Sec protein translocase complex. Interacts with the SecYEG preprotein conducting channel. Has a central role in coupling the hydrolysis of ATP to the transfer of proteins into and across the cell membrane, serving both as a receptor for the preprotein-SecB complex and as an ATP-driven molecular motor driving the stepwise translocation of polypeptide chains across the membrane. This Shewanella sp. (strain MR-7) protein is Protein translocase subunit SecA.